The chain runs to 105 residues: MKVRKGDTVLVISGKDKGAKGKVLVAYPDRNKVLVEGVNRIKKHTPESRTERGASSGGIVTQEAPISVSNVMLLDSDGKPTRVGYRRDDETGKNVRIAKSNGKDI.

Belongs to the universal ribosomal protein uL24 family. Part of the 50S ribosomal subunit.

One of two assembly initiator proteins, it binds directly to the 5'-end of the 23S rRNA, where it nucleates assembly of the 50S subunit. Its function is as follows. One of the proteins that surrounds the polypeptide exit tunnel on the outside of the subunit. This Mycolicibacterium vanbaalenii (strain DSM 7251 / JCM 13017 / BCRC 16820 / KCTC 9966 / NRRL B-24157 / PYR-1) (Mycobacterium vanbaalenii) protein is Large ribosomal subunit protein uL24.